Here is a 595-residue protein sequence, read N- to C-terminus: DNA primase (595 aa).

The CHC2-type zinc-finger motif lies at 38–62; it reads CPFHQEKTPSFTVSNSKRFFYCFGC. Positions 250 to 332 constitute a Toprim domain; the sequence is NHSILVEGYF…EKKISFIRLP (83 aa). Mg(2+)-binding residues include Glu-256, Asp-300, and Asp-302.

This sequence belongs to the DnaG primase family. Monomer. Interacts with DnaB. Zn(2+) is required as a cofactor. Requires Mg(2+) as cofactor.

The catalysed reaction is ssDNA + n NTP = ssDNA/pppN(pN)n-1 hybrid + (n-1) diphosphate.. In terms of biological role, RNA polymerase that catalyzes the synthesis of short RNA molecules used as primers for DNA polymerase during DNA replication. The chain is DNA primase from Rickettsia conorii (strain ATCC VR-613 / Malish 7).